We begin with the raw amino-acid sequence, 541 residues long: Nif-specific regulatory protein (541 aa).

The region spanning 23–158 is the GAF domain; that stretch reads RLETTLNNFV…MAANLAGRAI (136 aa). The disordered stretch occupies residues 170-191; the sequence is TFAEEQQEQQNSRDEQSQSSAR. Residues 200–428 enclose the Sigma-54 factor interaction domain; sequence IIGESTALMT…LENCVRRTAT (229 aa). ATP contacts are provided by residues 228–235 and 291–300; these read GETGTGKE and ANGGTLLLDE. Residues 429–498 form an inter-domain linker region; sequence LARSKTITSS…SAGVASNLIE (70 aa). Residues Cys442 and Cys447 each coordinate a divalent metal cation. A C-terminal DNA-binding domain region spans residues 499–541; sequence RDRLISALEEAGWNQAKAARILEKTPRQVGYALRRHGVDVRKL. Positions 513-532 form a DNA-binding region, H-T-H motif; it reads QAKAARILEKTPRQVGYALR.

Interacts with sigma-54.

Functionally, required for activation of most nif operons, which are directly involved in nitrogen fixation. The polypeptide is Nif-specific regulatory protein (nifA) (Rhizobium meliloti (strain 1021) (Ensifer meliloti)).